The sequence spans 619 residues: Chaperone protein HscA homolog (619 aa).

This sequence belongs to the heat shock protein 70 family.

Functionally, chaperone involved in the maturation of iron-sulfur cluster-containing proteins. Has a low intrinsic ATPase activity which is markedly stimulated by HscB. This Haemophilus influenzae (strain PittEE) protein is Chaperone protein HscA homolog.